The following is a 331-amino-acid chain: Glycerol-3-phosphate dehydrogenase [NAD(P)+] (331 aa).

NADPH is bound by residues Trp13, Arg33, and Lys103. Positions 103, 131, and 133 each coordinate sn-glycerol 3-phosphate. Ala135 is an NADPH binding site. The sn-glycerol 3-phosphate site is built by Lys187, Asp240, Ser250, Arg251, and Asn252. The active-site Proton acceptor is the Lys187. Arg251 serves as a coordination point for NADPH. NADPH is bound by residues Val275 and Glu277.

This sequence belongs to the NAD-dependent glycerol-3-phosphate dehydrogenase family.

It localises to the cytoplasm. It catalyses the reaction sn-glycerol 3-phosphate + NAD(+) = dihydroxyacetone phosphate + NADH + H(+). The catalysed reaction is sn-glycerol 3-phosphate + NADP(+) = dihydroxyacetone phosphate + NADPH + H(+). Its pathway is membrane lipid metabolism; glycerophospholipid metabolism. Functionally, catalyzes the reduction of the glycolytic intermediate dihydroxyacetone phosphate (DHAP) to sn-glycerol 3-phosphate (G3P), the key precursor for phospholipid synthesis. The chain is Glycerol-3-phosphate dehydrogenase [NAD(P)+] from Novosphingobium aromaticivorans (strain ATCC 700278 / DSM 12444 / CCUG 56034 / CIP 105152 / NBRC 16084 / F199).